A 60-amino-acid chain; its full sequence is uncharacterized protein (60 aa).

The protein resides in the host cytoplasm. This is an uncharacterized protein from Escherichia phage Mu (Bacteriophage Mu).